Here is a 444-residue protein sequence, read N- to C-terminus: Homogentisate 1,2-dioxygenase (444 aa).

The Proton acceptor role is filled by His298. Positions 341 and 347 each coordinate Fe cation. The homogentisate site is built by Tyr356 and His377. Residue His377 coordinates Fe cation.

The protein belongs to the homogentisate dioxygenase family. As to quaternary structure, hexamer; dimer of trimers. Fe cation serves as cofactor.

The catalysed reaction is homogentisate + O2 = 4-maleylacetoacetate + H(+). It functions in the pathway amino-acid degradation; L-phenylalanine degradation; acetoacetate and fumarate from L-phenylalanine: step 4/6. Involved in the catabolism of homogentisate (2,5-dihydroxyphenylacetate or 2,5-OH-PhAc), a central intermediate in the degradation of phenylalanine and tyrosine. Catalyzes the oxidative ring cleavage of the aromatic ring of homogentisate to yield maleylacetoacetate. This Burkholderia orbicola (strain MC0-3) protein is Homogentisate 1,2-dioxygenase.